A 126-amino-acid chain; its full sequence is Alpha-lactalbumin (126 aa).

A C-type lysozyme domain is found at 1-126 (KVFEKCELSQ…CIADLDQWKC (126 aa)). Cystine bridges form between Cys-6/Cys-126, Cys-30/Cys-117, Cys-63/Cys-82, and Cys-78/Cys-96. Asn-47 carries N-linked (GlcNAc...) asparagine glycosylation. 5 residues coordinate Ca(2+): Lys-84, Asp-87, Asp-89, Asp-92, and Asp-93.

Belongs to the glycosyl hydrolase 22 family. Lactose synthase (LS) is a heterodimer of a catalytic component, beta1,4-galactosyltransferase (beta4Gal-T1) and a regulatory component, alpha-lactalbumin (LA). As to expression, mammary gland specific. Secreted in milk.

Its subcellular location is the secreted. In terms of biological role, regulatory subunit of lactose synthase, changes the substrate specificity of galactosyltransferase in the mammary gland making glucose a good acceptor substrate for this enzyme. This enables LS to synthesize lactose, the major carbohydrate component of milk. In other tissues, galactosyltransferase transfers galactose onto the N-acetylglucosamine of the oligosaccharide chains in glycoproteins. In Tachyglossus aculeatus aculeatus (Southeast Australian short-beaked echidna), this protein is Alpha-lactalbumin (LALBA).